Consider the following 312-residue polypeptide: Malate dehydrogenase (312 aa).

NAD(+) is bound by residues 12–17 and aspartate 36; that span reads GAGFTG. 2 residues coordinate substrate: arginine 87 and arginine 93. Residues asparagine 100 and 123–125 each bind NAD(+); that span reads LTN. Asparagine 125 contributes to the substrate binding site. Serine 149 is subject to Phosphoserine. Arginine 156 serves as a coordination point for substrate. Catalysis depends on histidine 180, which acts as the Proton acceptor.

Belongs to the LDH/MDH superfamily. MDH type 3 family.

It catalyses the reaction (S)-malate + NAD(+) = oxaloacetate + NADH + H(+). Functionally, catalyzes the reversible oxidation of malate to oxaloacetate. This is Malate dehydrogenase from Bacillus cytotoxicus (strain DSM 22905 / CIP 110041 / 391-98 / NVH 391-98).